The primary structure comprises 182 residues: Lipoprotein signal peptidase (182 aa).

3 consecutive transmembrane segments (helical) span residues 21–41, 74–94, and 98–118; these read LLLS…VLAV, GYTW…FWMG, and VSPW…GNLV. Catalysis depends on residues D134 and D148. The chain crosses the membrane as a helical span at residues 146 to 166; it reads VADPSVVGGAILLVVLSIFGY.

Belongs to the peptidase A8 family.

Its subcellular location is the cell membrane. It carries out the reaction Release of signal peptides from bacterial membrane prolipoproteins. Hydrolyzes -Xaa-Yaa-Zaa-|-(S,diacylglyceryl)Cys-, in which Xaa is hydrophobic (preferably Leu), and Yaa (Ala or Ser) and Zaa (Gly or Ala) have small, neutral side chains.. It functions in the pathway protein modification; lipoprotein biosynthesis (signal peptide cleavage). Its function is as follows. This protein specifically catalyzes the removal of signal peptides from prolipoproteins. This is Lipoprotein signal peptidase from Mycobacterium avium (strain 104).